A 173-amino-acid chain; its full sequence is Protein tyrosine phosphatase type IVA 1 (173 aa).

The 154-residue stretch at 8 to 161 folds into the Tyrosine-protein phosphatase domain; it reads APVEVTYKNM…YRPKMRLRFK (154 aa). Cys-49 and Cys-104 are disulfide-bonded. Residue Asp-72 is the Proton donor of the active site. An interaction with ATF5 region spans residues 97 to 132; it reads GCCIAVHCVAGLGRAPVLVALALIEGGMKYEDAVQF. Cys-104 functions as the Phosphocysteine intermediate in the catalytic mechanism. 105–110 serves as a coordination point for phosphate; it reads VAGLGR. Arg-110 lines the substrate pocket. Cys-170 is subject to Cysteine methyl ester. Cys-170 carries S-farnesyl cysteine lipidation. Residues 171–173 constitute a propeptide, removed in mature form; that stretch reads CIQ.

It belongs to the protein-tyrosine phosphatase family. As to quaternary structure, homotrimer. Interacts with ATF5. Interacts with tubulin. Post-translationally, farnesylated. Farnesylation is required for membrane targeting. Unfarnesylated forms are shifted into the nucleus. Expressed in bone marrow, lymph nodes, T lymphocytes, spleen, thymus and tonsil. Overexpressed in tumor cell lines.

It localises to the cell membrane. The protein localises to the early endosome. It is found in the endoplasmic reticulum. Its subcellular location is the cytoplasm. The protein resides in the cytoskeleton. It localises to the spindle. The protein localises to the nucleus. The enzyme catalyses O-phospho-L-tyrosyl-[protein] + H2O = L-tyrosyl-[protein] + phosphate. Inhibited by sodium orthovanadate and pentamidine. Its function is as follows. Protein tyrosine phosphatase which stimulates progression from G1 into S phase during mitosis. May play a role in the development and maintenance of differentiating epithelial tissues. Enhances cell proliferation, cell motility and invasive activity, and promotes cancer metastasis. This is Protein tyrosine phosphatase type IVA 1 (PTP4A1) from Homo sapiens (Human).